The sequence spans 266 residues: uncharacterized protein (266 aa).

Belongs to the chlamydial CPn_0087/CT_309/TC_0583 family.

This is an uncharacterized protein from Chlamydia pneumoniae (Chlamydophila pneumoniae).